The primary structure comprises 337 residues: uncharacterized protein (337 aa).

Residues 5-235 (VEFDNVSRLY…PRTPFVAGFV (231 aa)) form the ABC transporter domain. 37–44 (GPSGSGKT) lines the ATP pocket.

Belongs to the ABC transporter superfamily.

In terms of biological role, probably part of the ABC transporter complex YdcSTUV. Probably responsible for energy coupling to the transport system. This is an uncharacterized protein from Escherichia coli (strain K12).